The following is a 197-amino-acid chain: Probable UbiX-like flavin prenyltransferase (197 aa).

FMN-binding positions include 9-11 (GAT), serine 36, 87-90 (SMKT), and arginine 122.

The protein belongs to the UbiX/PAD1 family. YclB subfamily. In terms of assembly, homododecamer.

The catalysed reaction is dimethylallyl phosphate + FMNH2 = prenylated FMNH2 + phosphate. Functionally, flavin prenyltransferase that catalyzes the synthesis of the prenylated FMN cofactor (prenyl-FMN) for phenolic acid decarboxylase C. Involved in the decarboxylation and detoxification of phenolic derivatives under both aerobic and anaerobic conditions. The sequence is that of Probable UbiX-like flavin prenyltransferase (ecdB) from Escherichia coli O111:H-.